The chain runs to 212 residues: Octanoyltransferase (212 aa).

The 179-residue stretch at Ala31–Ile209 folds into the BPL/LPL catalytic domain. Substrate contacts are provided by residues Arg70–His77, Ser138–Gly140, and Gly151–Ala153. Cys169 (acyl-thioester intermediate) is an active-site residue.

Belongs to the LipB family.

It is found in the cytoplasm. It carries out the reaction octanoyl-[ACP] + L-lysyl-[protein] = N(6)-octanoyl-L-lysyl-[protein] + holo-[ACP] + H(+). The protein operates within protein modification; protein lipoylation via endogenous pathway; protein N(6)-(lipoyl)lysine from octanoyl-[acyl-carrier-protein]: step 1/2. Catalyzes the transfer of endogenously produced octanoic acid from octanoyl-acyl-carrier-protein onto the lipoyl domains of lipoate-dependent enzymes. Lipoyl-ACP can also act as a substrate although octanoyl-ACP is likely to be the physiological substrate. This is Octanoyltransferase from Haemophilus influenzae (strain PittGG).